Consider the following 109-residue polypeptide: UPF0102 protein Suden_1901 (109 aa).

Belongs to the UPF0102 family.

In Sulfurimonas denitrificans (strain ATCC 33889 / DSM 1251) (Thiomicrospira denitrificans (strain ATCC 33889 / DSM 1251)), this protein is UPF0102 protein Suden_1901.